The sequence spans 284 residues: UPF0294 protein VV1_1880 (284 aa).

It belongs to the UPF0294 family.

The protein localises to the cytoplasm. The protein is UPF0294 protein VV1_1880 of Vibrio vulnificus (strain CMCP6).